The following is a 206-amino-acid chain: Orotate phosphoribosyltransferase (206 aa).

Residues Arg-114, Lys-115, Lys-118, His-120, and 141–149 each bind 5-phospho-alpha-D-ribose 1-diphosphate; that span reads EDVVTTGQS. The orotate site is built by Thr-145 and Arg-173.

The protein belongs to the purine/pyrimidine phosphoribosyltransferase family. PyrE subfamily. As to quaternary structure, homodimer. Mg(2+) is required as a cofactor.

The enzyme catalyses orotidine 5'-phosphate + diphosphate = orotate + 5-phospho-alpha-D-ribose 1-diphosphate. The protein operates within pyrimidine metabolism; UMP biosynthesis via de novo pathway; UMP from orotate: step 1/2. In terms of biological role, catalyzes the transfer of a ribosyl phosphate group from 5-phosphoribose 1-diphosphate to orotate, leading to the formation of orotidine monophosphate (OMP). The sequence is that of Orotate phosphoribosyltransferase from Nostoc sp. (strain PCC 7120 / SAG 25.82 / UTEX 2576).